Here is a 380-residue protein sequence, read N- to C-terminus: Putative zinc finger protein C02F5.12 (380 aa).

The segment at 137-187 (NLDIPGTSSDIPSDPSSALKVPKKEVLDESEEILDQTSGSSSFSLNDSEQA) is disordered. 2 stretches are compositionally biased toward polar residues: residues 142–152 (GTSSDIPSDPS) and 171–187 (DQTSGSSSFSLNDSEQA). The C2H2-type zinc finger occupies 271–294 (IPCKLCGFECTNVRRMRSHYAKAH).

It is found in the nucleus. This chain is Putative zinc finger protein C02F5.12, found in Caenorhabditis elegans.